The primary structure comprises 263 residues: Phosphatidylglycerol--prolipoprotein diacylglyceryl transferase (263 aa).

The next 4 membrane-spanning stretches (helical) occupy residues 10–30, 56–76, 91–111, and 117–137; these read VAIT…LFGF, MVTY…ILFY, IWNG…AMWL, and GLGF…GLFF. Arg-139 is an a 1,2-diacyl-sn-glycero-3-phospho-(1'-sn-glycerol) binding site. The next 3 helical transmembrane spans lie at 171 to 191, 199 to 219, and 231 to 251; these read PSQL…LWVF, GHVS…VEFV, and FGWL…GLWL.

It belongs to the Lgt family.

The protein localises to the cell inner membrane. It catalyses the reaction L-cysteinyl-[prolipoprotein] + a 1,2-diacyl-sn-glycero-3-phospho-(1'-sn-glycerol) = an S-1,2-diacyl-sn-glyceryl-L-cysteinyl-[prolipoprotein] + sn-glycerol 1-phosphate + H(+). It participates in protein modification; lipoprotein biosynthesis (diacylglyceryl transfer). Its function is as follows. Catalyzes the transfer of the diacylglyceryl group from phosphatidylglycerol to the sulfhydryl group of the N-terminal cysteine of a prolipoprotein, the first step in the formation of mature lipoproteins. The sequence is that of Phosphatidylglycerol--prolipoprotein diacylglyceryl transferase from Nitratidesulfovibrio vulgaris (strain DP4) (Desulfovibrio vulgaris).